The chain runs to 422 residues: GTPase Obg (422 aa).

One can recognise an Obg domain in the interval 1–156 (MKFIDEVNVL…FALRLVLKVL (156 aa)). The OBG-type G domain occupies 157–324 (ADVGLVGKPS…LKAAIFKMLE (168 aa)). GTP is bound by residues 163 to 170 (GKPSAGKS), 188 to 192 (FTTLV), 209 to 212 (DLPG), 278 to 281 (NKSD), and 305 to 307 (SAL). Mg(2+)-binding residues include serine 170 and threonine 190. The 79-residue stretch at 342-420 (NITLDRDALK…IGNFEFDWSD (79 aa)) folds into the OCT domain.

Belongs to the TRAFAC class OBG-HflX-like GTPase superfamily. OBG GTPase family. In terms of assembly, monomer. The cofactor is Mg(2+).

Its subcellular location is the cytoplasm. In terms of biological role, an essential GTPase which binds GTP, GDP and possibly (p)ppGpp with moderate affinity, with high nucleotide exchange rates and a fairly low GTP hydrolysis rate. Plays a role in control of the cell cycle, stress response, ribosome biogenesis and in those bacteria that undergo differentiation, in morphogenesis control. The protein is GTPase Obg of Metamycoplasma arthritidis (strain 158L3-1) (Mycoplasma arthritidis).